A 126-amino-acid polypeptide reads, in one-letter code: Small ribosomal subunit protein bS6 (126 aa).

This sequence belongs to the bacterial ribosomal protein bS6 family.

In terms of biological role, binds together with bS18 to 16S ribosomal RNA. This chain is Small ribosomal subunit protein bS6, found in Actinobacillus succinogenes (strain ATCC 55618 / DSM 22257 / CCUG 43843 / 130Z).